The sequence spans 886 residues: Leucine-rich repeat-containing protein sog2 (886 aa).

LRR repeat units follow at residues Asn28–Arg49, Arg53–Phe74, Arg76–Leu97, Ser99–Leu120, Asn122–Met143, and Asn145–Asn166. 4 disordered regions span residues Ser236 to Pro288, Ser301 to Ile364, Pro394 to Leu431, and Arg455 to Ser483. Positions Val243–Asp277 are enriched in polar residues. At Ser301 the chain carries Phosphoserine. Polar residues-rich tracts occupy residues Ser312–Ala347, Pro394–Ile406, and Ser419–Leu431. At Ser464 the chain carries Phosphoserine.

It localises to the cytoplasm. The protein localises to the nucleus. The sequence is that of Leucine-rich repeat-containing protein sog2 from Schizosaccharomyces pombe (strain 972 / ATCC 24843) (Fission yeast).